The chain runs to 317 residues: Large ribosomal subunit protein uL10z (317 aa).

The protein belongs to the universal ribosomal protein uL10 family. In terms of assembly, P0 forms a pentameric complex by interaction with dimers of P1 and P2. Phosphorylated.

In terms of biological role, ribosomal protein P0 is the functional equivalent of E.coli protein L10. This is Large ribosomal subunit protein uL10z (RPP0A) from Arabidopsis thaliana (Mouse-ear cress).